We begin with the raw amino-acid sequence, 535 residues long: Arginine-containing cyclodipeptide synthase anoA (535 aa).

The segment at Leu-93 to Ser-114 is disordered. Residues Ser-105 to Ser-114 are compositionally biased toward basic and acidic residues. Residues Asp-424–Glu-428 carry the Conserved DDXXE motif motif.

The protein belongs to the arginine-containing cyclodipeptide synthase family.

It carries out the reaction L-tryptophyl-tRNA(Trp) + L-arginyl-tRNA(Arg) = cyclo(L-arginyl-L-tryptophyl) + tRNA(Trp) + tRNA(Arg) + H(+). It functions in the pathway secondary metabolite biosynthesis. Functionally, arginine-containing cyclodipeptide synthase; part of the cluster that mediates the biosynthesis of a highly modified cyclo-arginine-tryptophan dipeptide (cRW). Within the pathway, AnoA acts as the scaffold-generating enzyme and is responsible for formation of the cyclo-Arg-Trp diketopiperazine (cRW) from L-arginyl-tRNA(Arg) + L-tryptophanyl-tRNA(Trp). Additional enzymes from the cluster then further modify the cyclo-Arg-Asp diketopiperazine (cRW) scaffold. This Aspergillus nomiae (Aspergillus nomius) protein is Arginine-containing cyclodipeptide synthase anoA.